A 218-amino-acid chain; its full sequence is Small ribosomal subunit protein uS3 (218 aa).

Residues 43–113 (IREHIERKLA…KVQVNVREVS (71 aa)) enclose the KH type-2 domain.

The protein belongs to the universal ribosomal protein uS3 family. Part of the 30S ribosomal subunit. Forms a tight complex with proteins S10 and S14.

Its function is as follows. Binds the lower part of the 30S subunit head. Binds mRNA in the 70S ribosome, positioning it for translation. The sequence is that of Small ribosomal subunit protein uS3 from Rubrobacter xylanophilus (strain DSM 9941 / JCM 11954 / NBRC 16129 / PRD-1).